The chain runs to 340 residues: Phosphate carrier protein, mitochondrial (340 aa).

A mitochondrion-targeting transit peptide spans 1 to 27; the sequence is MSVFSQLAESSKQNPFSLPVRSGNCAS. Solcar repeat units follow at residues 41–125, 138–222, and 239–317; these read KYYA…FKNV, YRTS…TVEA, and EQLV…VKVA. Transmembrane regions (helical) follow at residues 47-67, 95-114, 141-161, 200-220, 241-261, and 297-317; these read ALGG…LDLV, RALV…QGLG, SLYL…LAPM, PLWM…EKTV, LVVT…VSHP, and IIMI…VKVA.

This sequence belongs to the mitochondrial carrier (TC 2.A.29) family.

It localises to the mitochondrion inner membrane. Transport of phosphate groups from the cytosol to the mitochondrial matrix. In Caenorhabditis elegans, this protein is Phosphate carrier protein, mitochondrial.